A 144-amino-acid chain; its full sequence is Flagellar assembly factor FliW (144 aa).

It belongs to the FliW family. As to quaternary structure, interacts with translational regulator CsrA and flagellin(s).

The protein resides in the cytoplasm. Acts as an anti-CsrA protein, binds CsrA and prevents it from repressing translation of its target genes, one of which is flagellin. Binds to flagellin and participates in the assembly of the flagellum. In Bacillus pumilus (strain SAFR-032), this protein is Flagellar assembly factor FliW.